Reading from the N-terminus, the 317-residue chain is Egg-laying defective protein 26 (317 aa).

Residues 156-277 (EVNVSGVKFY…CSTGVPFSYD (122 aa)) enclose the LRAT domain. Catalysis depends on residues His-166 and His-178. Catalysis depends on Cys-261, which acts as the Acyl-thioester intermediate.

Highly expressed in the cells of the spermatheca, the mouth, and the lining of the pharynx, the rectum, and the excretory canal. Also expressed in the pharyngeal intestinal junction cell.

It localises to the apical cell membrane. In terms of biological role, putative acyltransferase. Plays a role in the morphogenesis of a vulval toroid cell, vulF, which is located where the vulva and the uterus connect. Not required for specifying vulval cell fate. The polypeptide is Egg-laying defective protein 26 (Caenorhabditis elegans).